Reading from the N-terminus, the 399-residue chain is Elongation factor Tu (399 aa).

A tr-type G domain is found at 10–209; it reads KPHVNIGTIG…AVDDYIPTPA (200 aa). Residues 19-26 are G1; it reads GHVDHGKT. 19 to 26 contributes to the GTP binding site; it reads GHVDHGKT. Position 26 (threonine 26) interacts with Mg(2+). The segment at 60-64 is G2; it reads GITIA. Residues 81-84 are G3; the sequence is DCPG. GTP-binding positions include 81–85 and 136–139; these read DCPGH and NKAD. Residues 136–139 form a G4 region; that stretch reads NKAD. Residues 174 to 176 form a G5 region; the sequence is SAL.

The protein belongs to the TRAFAC class translation factor GTPase superfamily. Classic translation factor GTPase family. EF-Tu/EF-1A subfamily. As to quaternary structure, monomer.

It is found in the cytoplasm. It carries out the reaction GTP + H2O = GDP + phosphate + H(+). In terms of biological role, GTP hydrolase that promotes the GTP-dependent binding of aminoacyl-tRNA to the A-site of ribosomes during protein biosynthesis. This Campylobacter lari (strain RM2100 / D67 / ATCC BAA-1060) protein is Elongation factor Tu.